A 246-amino-acid polypeptide reads, in one-letter code: Eukaryotic translation initiation factor 6 (246 aa).

The protein belongs to the eIF-6 family. Monomer. Associates with the 60S ribosomal subunit.

The protein localises to the cytoplasm. The protein resides in the nucleus. It localises to the nucleolus. Its function is as follows. Binds to the 60S ribosomal subunit and prevents its association with the 40S ribosomal subunit to form the 80S initiation complex in the cytoplasm. May also be involved in ribosome biogenesis. Involved in miRNA-mediated gene silencing. In Caenorhabditis elegans, this protein is Eukaryotic translation initiation factor 6.